Here is a 247-residue protein sequence, read N- to C-terminus: Chaperone protein AfaB (247 aa).

The N-terminal stretch at 1-29 is a signal peptide; it reads MKMRAVAVFTGMLTGVLSVAGLLSAGAYA.

Belongs to the periplasmic pilus chaperone family.

Its subcellular location is the periplasm. In terms of biological role, involved in the biogenesis of the AFA-III afimbrial adhesin. This chain is Chaperone protein AfaB (afaB), found in Escherichia coli.